A 188-amino-acid polypeptide reads, in one-letter code: Elongation factor P (188 aa).

This sequence belongs to the elongation factor P family.

The protein resides in the cytoplasm. Its pathway is protein biosynthesis; polypeptide chain elongation. In terms of biological role, involved in peptide bond synthesis. Stimulates efficient translation and peptide-bond synthesis on native or reconstituted 70S ribosomes in vitro. Probably functions indirectly by altering the affinity of the ribosome for aminoacyl-tRNA, thus increasing their reactivity as acceptors for peptidyl transferase. This is Elongation factor P from Aeromonas salmonicida (strain A449).